Here is a 125-residue protein sequence, read N- to C-terminus: Small ribosomal subunit protein uS12 (125 aa).

Residues 1–28 are disordered; sequence MPTINQLVRKGREKVKKKSKAPALEGNP. Residues 9 to 20 are compositionally biased toward basic residues; the sequence is RKGREKVKKKSK. D89 is modified (3-methylthioaspartic acid). The interval 104-125 is disordered; sequence AAGVKDRKQSRSKYGTKRPKEK. Over residues 113–125 the composition is skewed to basic residues; that stretch reads SRSKYGTKRPKEK.

Belongs to the universal ribosomal protein uS12 family. Part of the 30S ribosomal subunit. Contacts proteins S8 and S17. May interact with IF1 in the 30S initiation complex.

Its function is as follows. With S4 and S5 plays an important role in translational accuracy. Interacts with and stabilizes bases of the 16S rRNA that are involved in tRNA selection in the A site and with the mRNA backbone. Located at the interface of the 30S and 50S subunits, it traverses the body of the 30S subunit contacting proteins on the other side and probably holding the rRNA structure together. The combined cluster of proteins S8, S12 and S17 appears to hold together the shoulder and platform of the 30S subunit. The protein is Small ribosomal subunit protein uS12 of Persephonella marina (strain DSM 14350 / EX-H1).